Reading from the N-terminus, the 469-residue chain is MSGNSGSNQMWGGRFAGGPSAIMREINASIPFDKALWRQDIAASKAHVDMLGAQGIVSAEDAALIASGLDQVAAEYEANGVPENWDLEDIHMTTESRLAELIGPAAGRLHTARSRNDQVATDFRLWVRDAMDQAELGLKQLQVALVSRAGEHAASIMPGFTHLQTAQPVTLGHHLMAYYEMIGRDRSRFADARVRMNRSPLGSAALAGTGFPIDRFRTAEALGFDGPTDNSLDSVSDRDFALDYLMAAAQCSLHLSRLAEEFIIWASQPFGFVTLPDSLSTGSSIMPQKKNPDAAELVRGHSGRIVGCLTALMITMKGLPLAYSKDMQDDKPPVFEAASLLALSIAAMTGMVAEAKFRTDRMRAAAELGYATATDLADWLVRQANIPFREAHHITGSAVKLAESRGIALDQLSIEDLKAIDERIDERVYAALSVEASVAARCSHGGTAPDEVRKRVAQARVALGLEESA.

The protein belongs to the lyase 1 family. Argininosuccinate lyase subfamily.

It localises to the cytoplasm. The catalysed reaction is 2-(N(omega)-L-arginino)succinate = fumarate + L-arginine. Its pathway is amino-acid biosynthesis; L-arginine biosynthesis; L-arginine from L-ornithine and carbamoyl phosphate: step 3/3. The protein is Argininosuccinate lyase of Novosphingobium aromaticivorans (strain ATCC 700278 / DSM 12444 / CCUG 56034 / CIP 105152 / NBRC 16084 / F199).